Consider the following 107-residue polypeptide: MELPIYYPLGLGALLFGLGLWGALTQKNAVRILMFIEIMLNGVNLNLITFSRYYWQTSPEMAARAPILTLFVMTVAAAEASVGLAIILAMVRNRGVVEVDKATLLKG.

The next 3 helical transmembrane spans lie at Leu3 to Ala23, Val30 to Phe50, and Ile67 to Ile87.

This sequence belongs to the complex I subunit 4L family. As to quaternary structure, NDH-1 is composed of 14 different subunits. Subunits NuoA, H, J, K, L, M, N constitute the membrane sector of the complex.

Its subcellular location is the cell membrane. The enzyme catalyses a quinone + NADH + 5 H(+)(in) = a quinol + NAD(+) + 4 H(+)(out). Its function is as follows. NDH-1 shuttles electrons from NADH, via FMN and iron-sulfur (Fe-S) centers, to quinones in the respiratory chain. The immediate electron acceptor for the enzyme in this species is believed to be a menaquinone. Couples the redox reaction to proton translocation (for every two electrons transferred, four hydrogen ions are translocated across the cytoplasmic membrane), and thus conserves the redox energy in a proton gradient. This is NADH-quinone oxidoreductase subunit K 2 from Symbiobacterium thermophilum (strain DSM 24528 / JCM 14929 / IAM 14863 / T).